Reading from the N-terminus, the 380-residue chain is Sialidase-2 (380 aa).

The FRIP motif signature appears at 20–23; that stretch reads YRIP. Substrate contacts are provided by arginine 21 and arginine 41. Catalysis depends on aspartate 46, which acts as the Proton acceptor. The stretch at 127 to 138 is one BNR 1 repeat; that stretch reads VTSTDHGRTWSS. The substrate site is built by tyrosine 179 and tyrosine 181. Residues 197–208 form a BNR 2 repeat; the sequence is FLSHDHGRTWAR. Glutamate 218, arginine 237, and arginine 304 together coordinate substrate. Catalysis depends on tyrosine 334, which acts as the Nucleophile. Residue glutamate 355 is part of the active site.

This sequence belongs to the glycosyl hydrolase 33 family. Expressed in skeletal muscle, fetal liver and embryonic carcinoma cell line NT2-D1.

The protein localises to the cytoplasm. It is found in the cytosol. It catalyses the reaction Hydrolysis of alpha-(2-&gt;3)-, alpha-(2-&gt;6)-, alpha-(2-&gt;8)- glycosidic linkages of terminal sialic acid residues in oligosaccharides, glycoproteins, glycolipids, colominic acid and synthetic substrates.. It carries out the reaction a ganglioside GD1a + H2O = a ganglioside GM1 + N-acetylneuraminate. The enzyme catalyses a ganglioside GM1 + H2O = a ganglioside GA1 + N-acetylneuraminate. The catalysed reaction is a ganglioside GT1b + H2O = a ganglioside GD1b + N-acetylneuraminate. It catalyses the reaction a ganglioside GD1b + H2O = a ganglioside GM1 + N-acetylneuraminate. It carries out the reaction a ganglioside GD3 + H2O = a ganglioside GM3 + N-acetylneuraminate. The enzyme catalyses a ganglioside GM3 + H2O = a beta-D-galactosyl-(1-&gt;4)-beta-D-glucosyl-(1&lt;-&gt;1)-ceramide + N-acetylneuraminate. The catalysed reaction is a ganglioside GM2 + H2O = a ganglioside GA2 + N-acetylneuraminate. It catalyses the reaction a neolactoside IV(3)-alpha-NeuAc-nLc4Cer(d18:1(4E)) + H2O = a neolactoside nLc4Cer(d18:1(4E)) + N-acetylneuraminate. It carries out the reaction N-acetyl-alpha-neuraminosyl-(2-&gt;3)-beta-D-galactosyl-(1-&gt;4)-D-glucose + H2O = lactose + N-acetylneuraminate. Its function is as follows. Exo-alpha-sialidase that catalyzes the hydrolytic cleavage of the terminal sialic acid (N-acetylneuraminic acid, Neu5Ac) of a glycan moiety in the catabolism of glycolipids, glycoproteins and oligosacharides. Recognizes sialyl linkage positions of the glycan moiety as well as the supramolecular organization of the sialoglycoconjugate. Displays preference for alpha-(2-&gt;3)-sialylated GD1a and GT1B gangliosides over alpha-(2-&gt;8)-sialylated GD1b, in both monomeric forms and micelles. Hydrolyzes monomeric GM1 ganglioside, but has no activity toward the miscellar form. Has lower sialidase activity for glycoproteins such as fetuin and TF/transferrin that carry a mixture of alpha-(2-&gt;3) and alpha-(2-&gt;6)-sialyl linkages. Cleaves milk oligosaccharide alpha-(2-&gt;3)-sialyllactose, but is inactive toward alpha-(2-&gt;6)-sialyllactose isomer. Has no activity toward colominic acid, a homomer of alpha-(2-&gt;8)-linked Neu5Ac residues. This chain is Sialidase-2 (NEU2), found in Homo sapiens (Human).